We begin with the raw amino-acid sequence, 509 residues long: Cobyric acid synthase (509 aa).

A GATase cobBQ-type domain is found at 262-459 (EIKVGIIKLP…IHGIFENDNW (198 aa)). Residue Cys-343 is the Nucleophile of the active site. The active site involves His-451.

The protein belongs to the CobB/CobQ family. CobQ subfamily.

The protein operates within cofactor biosynthesis; adenosylcobalamin biosynthesis. Functionally, catalyzes amidations at positions B, D, E, and G on adenosylcobyrinic A,C-diamide. NH(2) groups are provided by glutamine, and one molecule of ATP is hydrogenolyzed for each amidation. This is Cobyric acid synthase from Prochlorococcus marinus (strain AS9601).